The sequence spans 91 residues: uncharacterized protein (91 aa).

This is an uncharacterized protein from Vaccinia virus (strain Copenhagen) (VACV).